A 256-amino-acid chain; its full sequence is tRNA (guanine-N(1)-)-methyltransferase (256 aa).

Residues Gly-117 and Leu-137–Leu-142 each bind S-adenosyl-L-methionine.

It belongs to the RNA methyltransferase TrmD family. Homodimer.

It localises to the cytoplasm. It catalyses the reaction guanosine(37) in tRNA + S-adenosyl-L-methionine = N(1)-methylguanosine(37) in tRNA + S-adenosyl-L-homocysteine + H(+). In terms of biological role, specifically methylates guanosine-37 in various tRNAs. The protein is tRNA (guanine-N(1)-)-methyltransferase of Methylibium petroleiphilum (strain ATCC BAA-1232 / LMG 22953 / PM1).